The chain runs to 677 residues: Bargin (677 aa).

Composition is skewed to low complexity over residues 1 to 13 and 29 to 39; these read MDRG…TPAV and APHAAAGPDGQ. Disordered stretches follow at residues 1–39 and 168–190; these read MDRG…PDGQ and SQAT…HSHT. The BAR domain maps to 25-270; that stretch reads EEAAAPHAAA…RENHGQADHS (246 aa). 3 positions are modified to phosphoserine: S183, S270, and S272. A Rho-GAP domain is found at 284–477; that stretch reads VSLATHLQEL…ALIQSADTLF (194 aa). Positions 504–577 are disordered; sequence SEELPSTAVP…DMARRSTGSL (74 aa). Over residues 516-530 the composition is skewed to pro residues; the sequence is ATTPAPAPAPAPAPA. S552 and S558 each carry phosphoserine. Residues 574-677 form a mediates non-covalent binding of poly-ubiquitin chains region; it reads TGSLAAAVET…IADLTEGLED (104 aa).

Expressed in brain (at protein level).

It is found in the cell membrane. The protein resides in the cytoplasm. It localises to the cytosol. GTPase activating protein (GAP) which specifically converts GTP-bound RAC1 and CDC42 in their inactive GDP-bound form. The GAP activity is enhanced by the non-covalent binding of K-29 and K-48 polyubiquitin chains. The protein is Bargin of Homo sapiens (Human).